A 202-amino-acid polypeptide reads, in one-letter code: Small ribosomal subunit protein uS4 (202 aa).

The 78-residue stretch at 91 to 168 (SMLSSVLYNS…QKVPDYLEVD (78 aa)) folds into the S4 RNA-binding domain.

The protein belongs to the universal ribosomal protein uS4 family. Part of the 30S ribosomal subunit. Contacts protein S5. The interaction surface between S4 and S5 is involved in control of translational fidelity.

Its function is as follows. One of the primary rRNA binding proteins, it binds directly to 16S rRNA where it nucleates assembly of the body of the 30S subunit. In terms of biological role, with S5 and S12 plays an important role in translational accuracy. The protein is Small ribosomal subunit protein uS4 of Ehrlichia ruminantium (strain Welgevonden).